We begin with the raw amino-acid sequence, 556 residues long: Arginine--tRNA ligase (556 aa).

The short motif at 133 to 143 (ANPTGPIHIGH) is the 'HIGH' region element.

It belongs to the class-I aminoacyl-tRNA synthetase family. In terms of assembly, monomer.

Its subcellular location is the cytoplasm. It carries out the reaction tRNA(Arg) + L-arginine + ATP = L-arginyl-tRNA(Arg) + AMP + diphosphate. This is Arginine--tRNA ligase from Dehalococcoides mccartyi (strain ATCC BAA-2100 / JCM 16839 / KCTC 5957 / BAV1).